The following is a 72-amino-acid chain: Translation initiation factor IF-1 (72 aa).

In terms of domain architecture, S1-like spans 1-72; that stretch reads MAKEDNIEMQ…SKGRIVFRSR (72 aa).

This sequence belongs to the IF-1 family. Component of the 30S ribosomal translation pre-initiation complex which assembles on the 30S ribosome in the order IF-2 and IF-3, IF-1 and N-formylmethionyl-tRNA(fMet); mRNA recruitment can occur at any time during PIC assembly.

It is found in the cytoplasm. In terms of biological role, one of the essential components for the initiation of protein synthesis. Stabilizes the binding of IF-2 and IF-3 on the 30S subunit to which N-formylmethionyl-tRNA(fMet) subsequently binds. Helps modulate mRNA selection, yielding the 30S pre-initiation complex (PIC). Upon addition of the 50S ribosomal subunit IF-1, IF-2 and IF-3 are released leaving the mature 70S translation initiation complex. The protein is Translation initiation factor IF-1 of Shewanella pealeana (strain ATCC 700345 / ANG-SQ1).